The chain runs to 425 residues: Serine--tRNA ligase (425 aa).

L-serine is bound at residue Thr-230–Glu-232. Residue Arg-261–Glu-263 participates in ATP binding. Residue Glu-284 coordinates L-serine. Glu-348 to Ser-351 contacts ATP. Ser-385 provides a ligand contact to L-serine.

The protein belongs to the class-II aminoacyl-tRNA synthetase family. Type-1 seryl-tRNA synthetase subfamily. Homodimer. The tRNA molecule binds across the dimer.

The protein localises to the cytoplasm. The enzyme catalyses tRNA(Ser) + L-serine + ATP = L-seryl-tRNA(Ser) + AMP + diphosphate + H(+). It carries out the reaction tRNA(Sec) + L-serine + ATP = L-seryl-tRNA(Sec) + AMP + diphosphate + H(+). It participates in aminoacyl-tRNA biosynthesis; selenocysteinyl-tRNA(Sec) biosynthesis; L-seryl-tRNA(Sec) from L-serine and tRNA(Sec): step 1/1. Its function is as follows. Catalyzes the attachment of serine to tRNA(Ser). Is also able to aminoacylate tRNA(Sec) with serine, to form the misacylated tRNA L-seryl-tRNA(Sec), which will be further converted into selenocysteinyl-tRNA(Sec). The chain is Serine--tRNA ligase from Wolbachia pipientis wMel.